A 208-amino-acid chain; its full sequence is ATP synthase subunit beta, chloroplastic (208 aa).

This sequence belongs to the ATPase alpha/beta chains family. F-type ATPases have 2 components, CF(1) - the catalytic core - and CF(0) - the membrane proton channel. CF(1) has five subunits: alpha(3), beta(3), gamma(1), delta(1), epsilon(1). CF(0) has four main subunits: a(1), b(1), b'(1) and c(9-12).

Its subcellular location is the plastid. It is found in the chloroplast thylakoid membrane. The enzyme catalyses ATP + H2O + 4 H(+)(in) = ADP + phosphate + 5 H(+)(out). Its function is as follows. Produces ATP from ADP in the presence of a proton gradient across the membrane. The catalytic sites are hosted primarily by the beta subunits. In Hypolepis hostilis (Fern), this protein is ATP synthase subunit beta, chloroplastic (atpB).